We begin with the raw amino-acid sequence, 508 residues long: Galactose-1-phosphate uridylyltransferase (508 aa).

This sequence belongs to the galactose-1-phosphate uridylyltransferase type 2 family.

The protein resides in the cytoplasm. It catalyses the reaction alpha-D-galactose 1-phosphate + UDP-alpha-D-glucose = alpha-D-glucose 1-phosphate + UDP-alpha-D-galactose. Its pathway is carbohydrate metabolism; galactose metabolism. In Halalkalibacterium halodurans (strain ATCC BAA-125 / DSM 18197 / FERM 7344 / JCM 9153 / C-125) (Bacillus halodurans), this protein is Galactose-1-phosphate uridylyltransferase (galT).